The primary structure comprises 387 residues: Protein PHYTOCHROME KINASE SUBSTRATE 3 (387 aa).

Disordered stretches follow at residues 1-21 (MDAE…PQLL), 74-128 (HEKE…CNSQ), and 242-271 (LSTK…ASVA). A compositionally biased stretch (polar residues) spans 12-21 (QISSYKPQLL). Over residues 74–83 (HEKENTHDHP) the composition is skewed to basic and acidic residues. Over residues 114–128 (HGTPSVRSESSCNSQ) the composition is skewed to polar residues. The span at 242 to 261 (LSTKNNNHNNNGNNSSMSSN) shows a compositional bias: low complexity.

It belongs to the PKS family.

Functionally, probably involved in the phytochrome signaling pathway. This is Protein PHYTOCHROME KINASE SUBSTRATE 3 (PKS3) from Arabidopsis thaliana (Mouse-ear cress).